A 712-amino-acid chain; its full sequence is Glycine--tRNA ligase beta subunit (712 aa).

This sequence belongs to the class-II aminoacyl-tRNA synthetase family. In terms of assembly, tetramer of two alpha and two beta subunits.

It is found in the cytoplasm. It catalyses the reaction tRNA(Gly) + glycine + ATP = glycyl-tRNA(Gly) + AMP + diphosphate. The chain is Glycine--tRNA ligase beta subunit from Acaryochloris marina (strain MBIC 11017).